Here is a 142-residue protein sequence, read N- to C-terminus: Large ribosomal subunit protein uL13 (142 aa).

Belongs to the universal ribosomal protein uL13 family. As to quaternary structure, part of the 50S ribosomal subunit.

Its function is as follows. This protein is one of the early assembly proteins of the 50S ribosomal subunit, although it is not seen to bind rRNA by itself. It is important during the early stages of 50S assembly. The sequence is that of Large ribosomal subunit protein uL13 from Aeromonas hydrophila subsp. hydrophila (strain ATCC 7966 / DSM 30187 / BCRC 13018 / CCUG 14551 / JCM 1027 / KCTC 2358 / NCIMB 9240 / NCTC 8049).